Reading from the N-terminus, the 462-residue chain is Metal cation symporter ZIP8 (462 aa).

A signal peptide spans 1 to 19 (MAPGRAVAGLLLLAATSLG). The Extracellular segment spans residues 20–132 (HPSEGPELAF…PSLSEVWGYG (113 aa)). Asn40, Asn88, and Asn96 each carry an N-linked (GlcNAc...) asparagine glycan. The chain crosses the membrane as a helical span at residues 133–153 (FLSVTIINLASLLGLILTPLI). The Cytoplasmic segment spans residues 154-160 (KKSYFPK). The helical transmembrane segment at 161 to 181 (ILTYFVGLAIGTLFSNAIFQL) threads the bilayer. Residues 182–191 (IPEAFGFNPK) are Extracellular-facing. Residues 192–212 (IDNYVEKAVAVFGGFYMLFFV) form a helical membrane-spanning segment. At 213–367 (ERTLKMLLKT…LNAGMSTRQA (155 aa)) the chain is on the cytoplasmic side. Residues 345–350 (EEFPHE) carry the XEXPHE-motif motif. The chain crosses the membrane as a helical span at residues 368–388 (LLFNFLSACSCYVGLAFGILV). Residues 389 to 390 (GN) lie on the Extracellular side of the membrane. A helical membrane pass occupies residues 391–411 (NFAPNIIFALAGGMFLYISLA). At 412-431 (DMFPEMNDMLREKVTGRQTD) the chain is on the cytoplasmic side. A helical transmembrane segment spans residues 432 to 452 (FTFFMIQNAGMLTGFTAILLI). Residues 453 to 462 (TLYAGDIELQ) lie on the Extracellular side of the membrane.

The protein belongs to the ZIP transporter (TC 2.A.5) family. As to quaternary structure, homodimer. In terms of processing, N-glycosylated. N-glycosylation is not required for proper iron and zinc transport. In terms of tissue distribution, ubiquitously expressed.

The protein localises to the cell membrane. It localises to the apical cell membrane. It is found in the basolateral cell membrane. Its subcellular location is the lysosome membrane. The catalysed reaction is Zn(2+)(out) + 2 hydrogencarbonate(out) = Zn(2+)(in) + 2 hydrogencarbonate(in). It carries out the reaction selenite(out) + Zn(2+)(out) + hydrogencarbonate(out) = selenite(in) + Zn(2+)(in) + hydrogencarbonate(in). It catalyses the reaction Mn(2+)(out) + 2 hydrogencarbonate(out) = Mn(2+)(in) + 2 hydrogencarbonate(in). The enzyme catalyses Cd(2+)(out) + 2 hydrogencarbonate(out) = Cd(2+)(in) + 2 hydrogencarbonate(in). The catalysed reaction is Fe(2+)(out) + 2 hydrogencarbonate(out) = Fe(2+)(in) + 2 hydrogencarbonate(in). It carries out the reaction Co(2+)(out) + 2 hydrogencarbonate(out) = Co(2+)(in) + 2 hydrogencarbonate(in). Electroneutral divalent metal cation:bicarbonate symporter of the plasma membrane mediating the cellular uptake of zinc and manganese, two divalent metal cations important for development, tissue homeostasis and immunity. Transports an electroneutral complex composed of a divalent metal cation and two bicarbonate anions or alternatively a bicarbonate and a selenite anion. Thereby, it also contributes to the cellular uptake of selenium, an essential trace metal and micronutrient. Also imports cadmium a non-essential metal which is cytotoxic and carcinogenic. May also transport iron and cobalt through membranes. Through zinc import, indirectly regulates the metal-dependent transcription factor MTF1 and the expression of some metalloproteases involved in cartilage catabolism and also probably heart development. Also indirectly regulates the expression of proteins involved in cell morphology and cytoskeleton organization. Indirectly controls innate immune function and inflammatory response by regulating zinc cellular uptake which in turn modulates the expression of genes specific of these processes. Protects, for instance, cells from injury and death at the onset of inflammation. By regulating zinc influx into monocytes also directly modulates their adhesion to endothelial cells and arteries. Reclaims manganese from the bile at the apical membrane of hepatocytes, thereby regulating the activity of the manganese-dependent enzymes through the systemic levels of the nutrient. Also participates in manganese reabsorption in the proximal tubule of the kidney. By mediating the extracellular uptake of manganese by cells of the blood-brain barrier, may also play a role in the transport of the micronutrient to the brain. With manganese cellular uptake also participates in mitochondrial proper function. Finally, also probably functions intracellularly, translocating zinc from lysosome to cytosol to indirectly enhance the expression of specific genes during TCR-mediated T cell activation. The protein is Metal cation symporter ZIP8 of Mus musculus (Mouse).